The sequence spans 125 residues: Large ribosomal subunit protein bL20 (125 aa).

The protein belongs to the bacterial ribosomal protein bL20 family.

Binds directly to 23S ribosomal RNA and is necessary for the in vitro assembly process of the 50S ribosomal subunit. It is not involved in the protein synthesizing functions of that subunit. This Zymomonas mobilis subsp. mobilis (strain ATCC 31821 / ZM4 / CP4) protein is Large ribosomal subunit protein bL20.